Here is a 367-residue protein sequence, read N- to C-terminus: Protein NDRG4-B (367 aa).

Basic and acidic residues predominate over residues 1–12 (MSELRFPEEKPL). Disordered regions lie at residues 1–21 (MSEL…TEME) and 333–367 (LTSA…EVSC). Positions 347 to 367 (CTQSESSDGIGQINHTMEVSC) are enriched in polar residues.

Belongs to the NDRG family.

The protein localises to the cytoplasm. It is found in the cytosol. In terms of biological role, contributes to the maintenance of intracerebral BDNF levels within the normal range. May enhance growth factor-induced ERK1 and ERK2 phosphorylation. May attenuate growth factor-promoted ELK1 phosphorylation in a microtubule-dependent manner. This is Protein NDRG4-B (ndrg4-b) from Xenopus laevis (African clawed frog).